Reading from the N-terminus, the 189-residue chain is Elongation factor P (189 aa).

This sequence belongs to the elongation factor P family.

The protein resides in the cytoplasm. It functions in the pathway protein biosynthesis; polypeptide chain elongation. Its function is as follows. Involved in peptide bond synthesis. Stimulates efficient translation and peptide-bond synthesis on native or reconstituted 70S ribosomes in vitro. Probably functions indirectly by altering the affinity of the ribosome for aminoacyl-tRNA, thus increasing their reactivity as acceptors for peptidyl transferase. The chain is Elongation factor P from Ehrlichia canis (strain Jake).